We begin with the raw amino-acid sequence, 106 residues long: Large ribosomal subunit protein uL24 (106 aa).

Belongs to the universal ribosomal protein uL24 family. As to quaternary structure, part of the 50S ribosomal subunit.

Its function is as follows. One of two assembly initiator proteins, it binds directly to the 5'-end of the 23S rRNA, where it nucleates assembly of the 50S subunit. One of the proteins that surrounds the polypeptide exit tunnel on the outside of the subunit. This is Large ribosomal subunit protein uL24 from Albidiferax ferrireducens (strain ATCC BAA-621 / DSM 15236 / T118) (Rhodoferax ferrireducens).